Reading from the N-terminus, the 490-residue chain is MKGLLSLSVLPVLAYASPMIVDSIHQNAAPILSSTNAKDIPDSYIVVFKKGVTSTSALAHQNWVQDIHTSVESKRMKKRNQFTFKNEAFDGLKHTFDFAGGFLGYSGHFDEEVIEQVRRHPDVEYIERDSEVHTLKAATENGAPWGLARISHRDKLNFGTFNKYIYASQGGEGVDAYVIDTGTNIDHVDFEGRASWGKTIPQGDDDVDGNGHGTHCSGTIAGKKYGVAKKANVYAVKVLRTSGSGTMSDVVKGVQWAAESHLKSVGEAKKGNRKGFKGSVANMSLGGGKSVTLDRVVDQAVAVGMHFAVAAGNDNADACNYSPAGSKNSITVGASTLADERAYFSNFGKCTDIFAPGLNIQSTWIGSKHAVNTISGTSMASPHICGLLAYFLSLQPASDSAFAVAEITPAEMKDNMISIASKDLLSDIPSDTPNLLAWNGGGSDDYKKIIGGARENDTTEFSSTLTEKLEKLAEEGLTAIYNELKDAVVA.

Residues 1–26 form the signal peptide; that stretch reads MKGLLSLSVLPVLAYASPMIVDSIHQ. Residues 27 to 134 constitute a propeptide that is removed on maturation; that stretch reads NAAPILSSTN…YIERDSEVHT (108 aa). The 92-residue stretch at 43 to 134 folds into the Inhibitor I9 domain; sequence SYIVVFKKGV…YIERDSEVHT (92 aa). Residues 144 to 450 enclose the Peptidase S8 domain; sequence PWGLARISHR…GGSDDYKKII (307 aa). Residues Asp180 and His212 each act as charge relay system in the active site. A glycan (N-linked (GlcNAc...) asparagine) is linked at Asn282. The active-site Charge relay system is the Ser378. Residue Asn456 is glycosylated (N-linked (GlcNAc...) asparagine).

The protein belongs to the peptidase S8 family.

It localises to the secreted. Functionally, secreted subtilisin-like serine protease with keratinolytic activity that contributes to pathogenicity. In Arthroderma benhamiae (strain ATCC MYA-4681 / CBS 112371) (Trichophyton mentagrophytes), this protein is Subtilisin-like protease 8 (SUB8).